The primary structure comprises 446 residues: N-succinylarginine dihydrolase (446 aa).

Residues 19–28 (SGLSYGNVAS), Asn-110, and 137–138 (HR) contribute to the substrate site. Residue Glu-174 is part of the active site. Arg-214 serves as a coordination point for substrate. Residue His-250 is part of the active site. Substrate is bound by residues Asp-252 and Asn-363. Cys-369 acts as the Nucleophile in catalysis.

This sequence belongs to the succinylarginine dihydrolase family. As to quaternary structure, homodimer.

The enzyme catalyses N(2)-succinyl-L-arginine + 2 H2O + 2 H(+) = N(2)-succinyl-L-ornithine + 2 NH4(+) + CO2. Its pathway is amino-acid degradation; L-arginine degradation via AST pathway; L-glutamate and succinate from L-arginine: step 2/5. Functionally, catalyzes the hydrolysis of N(2)-succinylarginine into N(2)-succinylornithine, ammonia and CO(2). The protein is N-succinylarginine dihydrolase of Hahella chejuensis (strain KCTC 2396).